We begin with the raw amino-acid sequence, 96 residues long: Co-chaperonin GroES (96 aa).

The protein belongs to the GroES chaperonin family. As to quaternary structure, heptamer of 7 subunits arranged in a ring. Interacts with the chaperonin GroEL.

The protein resides in the cytoplasm. Together with the chaperonin GroEL, plays an essential role in assisting protein folding. The GroEL-GroES system forms a nano-cage that allows encapsulation of the non-native substrate proteins and provides a physical environment optimized to promote and accelerate protein folding. GroES binds to the apical surface of the GroEL ring, thereby capping the opening of the GroEL channel. This is Co-chaperonin GroES from Methylobacterium radiotolerans (strain ATCC 27329 / DSM 1819 / JCM 2831 / NBRC 15690 / NCIMB 10815 / 0-1).